Reading from the N-terminus, the 399-residue chain is Forkhead box protein A4 (399 aa).

Residues 119–213 (KPPYSYISLI…ENGCYLRRQK (95 aa)) constitute a DNA-binding region (fork-head). The span at 219-234 (RSKSGEREKKVNKPGD) shows a compositional bias: basic and acidic residues. Positions 219 to 290 (RSKSGEREKK…VGLSPTSEQA (72 aa)) are disordered. The segment covering 267 to 277 (STGSSIHQASG) has biased composition (polar residues).

It is found in the nucleus. Transcriptional repressor involved in embryonic nervous system development. Plays a role in the induction and patterning of the anterior-posterior neural axis. Involved in the establishment of floor plate differentiation from neural plate cells during gastrulation. Binds the anf1 promoter sequence to restrict expression of anf1 to the anterior of the neural plate, thereby patterning the forebrain. Can bind to the HNF-3-alpha DNA target sequence. Cooperates with t/bra in a dose-dependent manner to specify dorsal mesoderm formation, including notochord. May be involved in the dorso-ventral patterning of the mesoderm. Binds to DNA via the target sequence 5'-[GA]TAAA[TC]A-3', with 5'-GTAAATA-3' being the preferred binding site. This is Forkhead box protein A4 from Xenopus tropicalis (Western clawed frog).